The primary structure comprises 346 residues: Histidinol-phosphate aminotransferase (346 aa).

Residue lysine 209 is modified to N6-(pyridoxal phosphate)lysine.

It belongs to the class-II pyridoxal-phosphate-dependent aminotransferase family. Histidinol-phosphate aminotransferase subfamily. In terms of assembly, homodimer. It depends on pyridoxal 5'-phosphate as a cofactor.

The enzyme catalyses L-histidinol phosphate + 2-oxoglutarate = 3-(imidazol-4-yl)-2-oxopropyl phosphate + L-glutamate. Its pathway is amino-acid biosynthesis; L-histidine biosynthesis; L-histidine from 5-phospho-alpha-D-ribose 1-diphosphate: step 7/9. This chain is Histidinol-phosphate aminotransferase, found in Aliivibrio fischeri (strain MJ11) (Vibrio fischeri).